Consider the following 276-residue polypeptide: S-adenosylmethionine decarboxylase proenzyme (276 aa).

Ser-126 serves as the catalytic Schiff-base intermediate with substrate; via pyruvic acid. Ser-126 bears the Pyruvic acid (Ser); by autocatalysis mark. The active-site Proton acceptor; for processing activity is His-131. Cys-154 functions as the Proton donor; for catalytic activity in the catalytic mechanism.

Belongs to the prokaryotic AdoMetDC family. Type 2 subfamily. In terms of assembly, heterooctamer of four alpha and four beta chains arranged as a tetramer of alpha/beta heterodimers. The cofactor is pyruvate. Post-translationally, is synthesized initially as an inactive proenzyme. Formation of the active enzyme involves a self-maturation process in which the active site pyruvoyl group is generated from an internal serine residue via an autocatalytic post-translational modification. Two non-identical subunits are generated from the proenzyme in this reaction, and the pyruvate is formed at the N-terminus of the alpha chain, which is derived from the carboxyl end of the proenzyme. The post-translation cleavage follows an unusual pathway, termed non-hydrolytic serinolysis, in which the side chain hydroxyl group of the serine supplies its oxygen atom to form the C-terminus of the beta chain, while the remainder of the serine residue undergoes an oxidative deamination to produce ammonia and the pyruvoyl group blocking the N-terminus of the alpha chain.

The enzyme catalyses S-adenosyl-L-methionine + H(+) = S-adenosyl 3-(methylsulfanyl)propylamine + CO2. Its pathway is amine and polyamine biosynthesis; S-adenosylmethioninamine biosynthesis; S-adenosylmethioninamine from S-adenosyl-L-methionine: step 1/1. In terms of biological role, catalyzes the decarboxylation of S-adenosylmethionine to S-adenosylmethioninamine (dcAdoMet), the propylamine donor required for the synthesis of the polyamines spermine and spermidine from the diamine putrescine. The protein is S-adenosylmethionine decarboxylase proenzyme of Alcanivorax borkumensis (strain ATCC 700651 / DSM 11573 / NCIMB 13689 / SK2).